Here is a 173-residue protein sequence, read N- to C-terminus: Photosystem I assembly protein Ycf3 (173 aa).

TPR repeat units follow at residues 35 to 68, 72 to 105, and 120 to 153; these read AYVY…EENP, GETL…NPKQ, and GRTA…NPGG.

Belongs to the Ycf3 family.

It is found in the cellular thylakoid membrane. In terms of biological role, essential for the assembly of the photosystem I (PSI) complex. May act as a chaperone-like factor to guide the assembly of the PSI subunits. This Synechococcus sp. (strain WH7803) protein is Photosystem I assembly protein Ycf3.